The primary structure comprises 136 residues: Large ribosomal subunit protein bL17 (136 aa).

This sequence belongs to the bacterial ribosomal protein bL17 family. In terms of assembly, part of the 50S ribosomal subunit. Contacts protein L32.

The chain is Large ribosomal subunit protein bL17 from Akkermansia muciniphila (strain ATCC BAA-835 / DSM 22959 / JCM 33894 / BCRC 81048 / CCUG 64013 / CIP 107961 / Muc).